A 520-amino-acid chain; its full sequence is Amine oxidase [flavin-containing] B (520 aa).

Ser2 bears the N-acetylserine mark. Topologically, residues 2–489 are cytoplasmic; it reads SGKCDVVVVG…TFLERHLPSV (488 aa). Lys52 bears the N6-acetyllysine mark. The residue at position 397 (Cys397) is an S-8alpha-FAD cysteine. A helical; Anchor for type IV membrane protein membrane pass occupies residues 490-516; that stretch reads PGLLRLIGLTAIFSATALGVLAHKRGL. Residues 517–520 are Mitochondrial intermembrane-facing; it reads LVRV.

Belongs to the flavin monoamine oxidase family. As to quaternary structure, monomer, homo- or heterodimer (containing two subunits of similar size). Each subunit contains a covalently bound flavin. Enzymatically active as monomer. FAD is required as a cofactor.

The protein localises to the mitochondrion outer membrane. It catalyses the reaction a secondary aliphatic amine + O2 + H2O = a primary amine + an aldehyde + H2O2. The enzyme catalyses (R)-adrenaline + O2 + H2O = (R)-3,4-dihydroxymandelaldehyde + methylamine + H2O2. The catalysed reaction is a primary methyl amine + O2 + H2O = an aldehyde + H2O2 + NH4(+). It carries out the reaction benzylamine + O2 + H2O = benzaldehyde + H2O2 + NH4(+). It catalyses the reaction dopamine + O2 + H2O = 3,4-dihydroxyphenylacetaldehyde + H2O2 + NH4(+). The enzyme catalyses tyramine + O2 + H2O = (4-hydroxyphenyl)acetaldehyde + H2O2 + NH4(+). The catalysed reaction is (R)-noradrenaline + O2 + H2O = (R)-3,4-dihydroxymandelaldehyde + H2O2 + NH4(+). It carries out the reaction 2-phenylethylamine + O2 + H2O = 2-phenylacetaldehyde + H2O2 + NH4(+). It catalyses the reaction N-acetylputrescine + O2 + H2O = 4-acetamidobutanal + H2O2 + NH4(+). Its function is as follows. Catalyzes the oxidative deamination of primary and some secondary amines such as neurotransmitters, and exogenous amines including the tertiary amine, neurotoxin 1-methyl-4-phenyl-1,2,3,6-tetrahydropyridine (MPTP), with concomitant reduction of oxygen to hydrogen peroxide and participates in the metabolism of neuroactive and vasoactive amines in the central nervous system and peripheral tissues. Preferentially degrades benzylamine and phenylethylamine. This chain is Amine oxidase [flavin-containing] B, found in Canis lupus familiaris (Dog).